The chain runs to 175 residues: Polyadenylate-binding protein-interacting protein 6 (175 aa).

Residues 7-17 (TLNPYAAAYVP) carry the PAM2-like motif. The 44-residue stretch at 83–126 (EMDMDIEYLLATYPGLSQESINDVYLANTCDLDATIEMLNQLEI) folds into the CUE domain. The segment at 145–175 (PEIITESSKQKNDGSSASSSSGIRNANVSSS) is disordered. The span at 166-175 (GIRNANVSSS) shows a compositional bias: polar residues.

This chain is Polyadenylate-binding protein-interacting protein 6 (CID6), found in Arabidopsis thaliana (Mouse-ear cress).